Here is a 736-residue protein sequence, read N- to C-terminus: Zinc finger CCCH domain-containing protein 14 (736 aa).

Met1 carries the N-acetylmethionine modification. Residues 77–103 (TTEPSSLKSPDTSIFDSNVPSNKSSFS) show a composition bias toward polar residues. The tract at residues 77–153 (TTEPSSLKSP…RHSYDDGAST (77 aa)) is disordered. Ser85 carries the phosphoserine modification. Residues Lys99, Lys139, Lys175, and Lys198 each participate in a glycyl lysine isopeptide (Lys-Gly) (interchain with G-Cter in SUMO2) cross-link. A compositionally biased stretch (basic and acidic residues) spans 123–148 (RPEKRDSRVSTSSQEHKSTNVRHSYD). A Phosphoserine modification is found at Ser240. Residues Lys245, Lys283, and Lys295 each participate in a glycyl lysine isopeptide (Lys-Gly) (interchain with G-Cter in SUMO2) cross-link. The segment at 308 to 350 (FSHDGEEEEEDEDYGTRVGSLSSSVSVPAKPERRPSLPPSKQA) is disordered. Phosphoserine is present on residues Ser309, Ser327, and Ser343. The residue at position 357 (Lys357) is an N6-acetyllysine; alternate. Lys357 participates in a covalent cross-link: Glycyl lysine isopeptide (Lys-Gly) (interchain with G-Cter in SUMO2); alternate. The span at 367–380 (TKTTNYPAVPQKQT) shows a compositional bias: polar residues. The interval 367–386 (TKTTNYPAVPQKQTLPVAPR) is disordered. Lys378 is covalently cross-linked (Glycyl lysine isopeptide (Lys-Gly) (interchain with G-Cter in SUMO2)). A phosphoserine mark is found at Ser390 and Ser409. Residues 400–420 (QGQNRAPRISPPVKEEEAKGD) are disordered. Glycyl lysine isopeptide (Lys-Gly) (interchain with G-Cter in SUMO2) cross-links involve residues Lys413 and Lys489. Ser498, Ser515, Ser527, and Ser620 each carry phosphoserine. 5 C3H1-type zinc fingers span residues 595-620 (EKLL…HPIS), 621-640 (PCKA…VHPN), 641-656 (CKYD…PFTH), 682-699 (CRYF…YHPK), and 701-719 (CRFN…HPTI).

It belongs to the ZC3H14 family. In terms of assembly, homodimer; facilitating circular RNAs (circRNAs) formation. Associates with the spliceosome. Interacts with HOOK2. Interacts with ZFC3H1 in a RNase-sensitive manner.

It localises to the nucleus speckle. RNA-binding protein involved in the biogenesis of circular RNAs (circRNAs), which are produced by back-splicing circularization of pre-mRNAs. Acts by binding to both exon-intron boundary and 3'-UTR of pre-mRNAs to promote circRNA biogenesis through dimerization and the association with the spliceosome. Required for spermatogenesis via involvement in circRNA biogenesis. Regulates the pre-mRNA processing of ATP5MC1; preventing its degradation. Also binds the poly(A) tail of mRNAs; controlling poly(A) length in neuronal cells. The protein is Zinc finger CCCH domain-containing protein 14 of Rattus norvegicus (Rat).